A 177-amino-acid polypeptide reads, in one-letter code: MSYKLKVKGQYIKDLSFENQNSPQIFVMISKTPPEINISVNVSSVSLPVKAQDQENGQSLDNKVEPLYEVTLQVNAEARVGTTVAFICEVKYCGVFSVENSDASNGEELSQQDMRDMLLISAPSILFPFVRELISRITATGGFPPLMLDVVDFKAMYESQIKQNAAEQNDNGQHTEK.

This sequence belongs to the SecB family. In terms of assembly, homotetramer, a dimer of dimers. One homotetramer interacts with 1 SecA dimer.

The protein resides in the cytoplasm. One of the proteins required for the normal export of preproteins out of the cell cytoplasm. It is a molecular chaperone that binds to a subset of precursor proteins, maintaining them in a translocation-competent state. It also specifically binds to its receptor SecA. The sequence is that of Protein-export protein SecB from Ehrlichia canis (strain Jake).